Consider the following 221-residue polypeptide: 3-phospho-D-glycerate guanylyltransferase (221 aa).

Belongs to the CofC family.

The catalysed reaction is (2R)-3-phosphoglycerate + GTP + H(+) = 3-[(R)-glyceryl]-diphospho-5'-guanosine + diphosphate. It carries out the reaction (2S)-2-phospholactate + GTP + H(+) = (2S)-lactyl-2-diphospho-5'-guanosine + diphosphate. Its pathway is cofactor biosynthesis; coenzyme F420 biosynthesis. Guanylyltransferase that catalyzes the activation of (2R)-3-phosphoglycerate (3PG) as 3-[(R)-glyceryl]-diphospho-5'-guanosine, via the condensation of 3PG with GTP. It is involved in the biosynthesis of a derivative of the hydride carrier cofactor coenzyme F420, 3PG-F420. Can also use (2S)-2-phospholactate (2-PL), with lower turnover, and has weak activity with phosphoenolpyruvate (PEP). The sequence is that of 3-phospho-D-glycerate guanylyltransferase from Mycetohabitans rhizoxinica (strain DSM 19002 / CIP 109453 / HKI 454) (Paraburkholderia rhizoxinica).